The following is a 66-amino-acid chain: U10-theraphotoxin-Cg1a 3 (66 aa).

Positions 1 to 21 are cleaved as a signal peptide; it reads MKTSVLFVIFGLALLFCLSFA. Residues 22–29 constitute a propeptide that is removed on maturation; that stretch reads DELEDTGR. Intrachain disulfides connect C31–C46, C38–C51, and C45–C58.

This sequence belongs to the neurotoxin 10 (Hwtx-1) family. 29 (Jztx-13) subfamily. In terms of tissue distribution, expressed by the venom gland.

It localises to the secreted. In terms of biological role, probable ion channel inhibitor. The protein is U10-theraphotoxin-Cg1a 3 of Chilobrachys guangxiensis (Chinese earth tiger tarantula).